Reading from the N-terminus, the 423-residue chain is D-tagatose-1,6-bisphosphate aldolase subunit GatZ (423 aa).

Belongs to the GatZ/KbaZ family. GatZ subfamily. In terms of assembly, forms a complex with GatY.

It functions in the pathway carbohydrate metabolism; D-tagatose 6-phosphate degradation; D-glyceraldehyde 3-phosphate and glycerone phosphate from D-tagatose 6-phosphate: step 2/2. In terms of biological role, component of the tagatose-1,6-bisphosphate aldolase GatYZ that is required for full activity and stability of the Y subunit. Could have a chaperone-like function for the proper and stable folding of GatY. When expressed alone, GatZ does not show any aldolase activity. Is involved in the catabolism of galactitol. This is D-tagatose-1,6-bisphosphate aldolase subunit GatZ from Salmonella paratyphi B (strain ATCC BAA-1250 / SPB7).